The chain runs to 750 residues: Methylmalonyl-CoA mutase, mitochondrial (750 aa).

A mitochondrion-targeting transit peptide spans Met1–Leu32. Gln50 contacts malonyl-CoA. Lys89 bears the N6-acetyllysine mark. Malonyl-CoA contacts are provided by residues Tyr96–Met99 and Thr106–Tyr110. Lys212 is subject to N6-acetyllysine. Malonyl-CoA is bound by residues Thr216 to Gln218, Arg228, Lys255, His265, and Arg304 to Ser306. The residue at position 335 (Lys335) is an N6-acetyllysine. N6-succinyllysine is present on Lys343. Ser481 is subject to Phosphoserine. Position 595 is an N6-succinyllysine (Lys595). Lys602 is modified (N6-acetyllysine). Residues Arg614–Lys746 form the B12-binding domain. Position 627 (His627) interacts with adenosylcob(III)alamin.

Belongs to the methylmalonyl-CoA mutase family. As to quaternary structure, homodimer. Interacts (the apoenzyme form) with MMAA; the interaction is GTP dependent. The cofactor is adenosylcob(III)alamin.

The protein resides in the mitochondrion matrix. It localises to the mitochondrion. The protein localises to the cytoplasm. It catalyses the reaction (R)-methylmalonyl-CoA = succinyl-CoA. With respect to regulation, during catalysis, accumulation of oxidized inactive cofactor hydroxocobalamin (OH2Cbl) leads to loss of MMUT activity. Interaction with MMAA decreases the rate of OH2Cbl formation and promotes the replacement of OH2Cbl by the active cofactor adenosylcobalamin (AdoCbl), thereby restoring MMUT activity. Inhibited by itaconyl-CoA, a metabolite that inactivates the coenzyme B12 cofactor. Inhibited at high concentration of substrate. Its function is as follows. Catalyzes the reversible isomerization of methylmalonyl-CoA (MMCoA) (generated from branched-chain amino acid metabolism and degradation of dietary odd chain fatty acids and cholesterol) to succinyl-CoA (3-carboxypropionyl-CoA), a key intermediate of the tricarboxylic acid cycle. The protein is Methylmalonyl-CoA mutase, mitochondrial of Homo sapiens (Human).